A 304-amino-acid polypeptide reads, in one-letter code: Ribosomal protein L11 methyltransferase (304 aa).

The S-adenosyl-L-methionine site is built by threonine 155, glycine 176, aspartate 198, and asparagine 239.

It belongs to the methyltransferase superfamily. PrmA family.

The protein resides in the cytoplasm. The enzyme catalyses L-lysyl-[protein] + 3 S-adenosyl-L-methionine = N(6),N(6),N(6)-trimethyl-L-lysyl-[protein] + 3 S-adenosyl-L-homocysteine + 3 H(+). Its function is as follows. Methylates ribosomal protein L11. In Caldicellulosiruptor bescii (strain ATCC BAA-1888 / DSM 6725 / KCTC 15123 / Z-1320) (Anaerocellum thermophilum), this protein is Ribosomal protein L11 methyltransferase.